Consider the following 83-residue polypeptide: Carboxysome shell vertex protein CsoS4A (83 aa).

One can recognise a BMV domain in the interval 1-78; sequence MKIMQVEKTL…SDLTIIGIID (78 aa).

It belongs to the CcmL/EutN family. CsoS4 subfamily. As to quaternary structure, homopentamer.

It localises to the carboxysome. Functionally, probably forms vertices in the carboxysome, a polyhedral inclusion where RuBisCO (ribulose bisphosphate carboxylase, cbbL-cbbS) is sequestered. Has been modeled to induce curvature upon insertion into an otherwise flat hexagonal layer of major carboxysome subunits. A minor shell protein, only 12 pentamers of CsoS4A/CsoS4B are calculated to be present in each carboxysome. The 2 CsoS4 proteins contribute to the impermeability of the carboxysome to CO(2). In terms of biological role, unlike beta-carboxysomes, alpha-carboxysomes (Cb) can form without cargo protein. CsoS2 is essential for Cb formation and is also capable of targeting foreign proteins to the Cb. The Cb shell assembles with the aid of CsoS2; CsoS1A, CsoS1B and CsoS1C form the majority of the shell while CsoS4A and CsoS4B form vertices. CsoS1D forms pseudohexamers that probably control metabolite flux into and out of the shell. The protein is Carboxysome shell vertex protein CsoS4A of Halothiobacillus neapolitanus (strain ATCC 23641 / c2) (Thiobacillus neapolitanus).